A 946-amino-acid chain; its full sequence is Rho GTPase-activating protein 4 (946 aa).

The 299-residue stretch at 19-317 (TQVKEMRWQL…AVEALDPPGD (299 aa)) folds into the F-BAR domain. A coiled-coil region spans residues 128–195 (LAQRLSHIAE…REAERQEEKR (68 aa)). Positions 187–196 (EAERQEEKRA) are enriched in basic and acidic residues. 2 disordered regions span residues 187-220 (EAER…SLKK) and 402-435 (LDSF…QQQE). Low complexity-rich tracts occupy residues 202 to 211 (TTTAGATEAG) and 407 to 419 (TSPS…STSS). The Rho-GAP domain occupies 507–695 (GDMEKFIQSS…TLIVQPDRVF (189 aa)). The SH3 domain maps to 746–805 (EGVVEAVACFAYTGRTAQELSFRRGDVLRLHERASSDWWRGEHNGMRGLIPHKYITLPAG). 3 positions are modified to phosphoserine: S860, S901, and S906. The segment at 885–946 (KTSVRQGLGP…QGLDTTPKPH (62 aa)) is disordered. Positions 901 to 910 (SPGPRSPKAP) are enriched in pro residues. A compositionally biased stretch (low complexity) spans 924–934 (GPGAPASPSAS).

As to quaternary structure, interacts with NCKAP1L. As to expression, predominantly in hematopoietic cells (spleen, thymus and leukocytes); low levels in placenta, lung and various fetal tissues.

The protein localises to the cytoplasm. Inhibitory effect on stress fiber organization. May down-regulate Rho-like GTPase in hematopoietic cells. The chain is Rho GTPase-activating protein 4 from Homo sapiens (Human).